The sequence spans 262 residues: Adenosylcobinamide-GDP ribazoletransferase (262 aa).

8 consecutive transmembrane segments (helical) span residues 4-21, 37-57, 62-82, 112-132, 141-161, 181-201, 202-222, and 236-256; these read AWSG…IPIR, AFPL…FIFS, LSPL…AGGL, VGAF…LFVF, IFLI…LLIY, YDAH…CAIH, FSVW…VFVA, and DALG…IWLL.

The protein belongs to the CobS family. Mg(2+) is required as a cofactor.

It localises to the cell membrane. It catalyses the reaction alpha-ribazole + adenosylcob(III)inamide-GDP = adenosylcob(III)alamin + GMP + H(+). The catalysed reaction is alpha-ribazole 5'-phosphate + adenosylcob(III)inamide-GDP = adenosylcob(III)alamin 5'-phosphate + GMP + H(+). It functions in the pathway cofactor biosynthesis; adenosylcobalamin biosynthesis; adenosylcobalamin from cob(II)yrinate a,c-diamide: step 7/7. Joins adenosylcobinamide-GDP and alpha-ribazole to generate adenosylcobalamin (Ado-cobalamin). Also synthesizes adenosylcobalamin 5'-phosphate from adenosylcobinamide-GDP and alpha-ribazole 5'-phosphate. This Geobacillus sp. (strain WCH70) protein is Adenosylcobinamide-GDP ribazoletransferase.